The chain runs to 710 residues: Pentatricopeptide repeat-containing protein At1g02060, chloroplastic (710 aa).

A chloroplast-targeting transit peptide spans 1 to 21; sequence MVSSVPKLHALFVSKSQPVLR. 12 PPR repeats span residues 137–171, 172–202, 208–242, 243–277, 280–314, 315–351, 352–386, 387–421, 429–459, 463–497, 498–532, and 533–567; these read QDRYFNSLIRSYGNAGLFQESVKLFQTMKQMGISP, SVLTFNSLLSILLKRGRTGMAHDLFDEMRRT, DSYTFNTLINGFCKNSMVDEAFRIFKDMELYHCNP, DVVTYNTIIDGLCRAGKVKIAHNVLSGMLKKATDV, NVVSYTTLVRGYCMKQEIDEAVLVFHDMLSRGLKP, NAVTYNTLIKGLSEAHRYDEIKDILIGGNDAFTTFAP, DACTFNILIKAHCDAGHLDAAMKVFQEMLNMKLHP, DSASYSVLIRTLCMRNEFDRAETLFNELFEKEVLL, LAAAYNPMFEYLCANGKTKQAEKVFRQLMKR, DPPSYKTLITGHCREGKFKPAYELLVLMLRREFVP, DLETYELLIDGLLKIGEALLAHDTLQRMLRSSYLP, and VATTFHSVLAELAKRKFANESFCLVTLMLEKRIRQ.

Belongs to the PPR family. P subfamily.

It localises to the plastid. Its subcellular location is the chloroplast. The sequence is that of Pentatricopeptide repeat-containing protein At1g02060, chloroplastic from Arabidopsis thaliana (Mouse-ear cress).